The following is a 652-amino-acid chain: Acetyl-coenzyme A synthetase (652 aa).

Residues 191–194 (RAGR), T311, and N335 contribute to the CoA site. Residues 387–389 (GEP), 411–416 (DTWWQT), D500, and R515 contribute to the ATP site. S523 is a CoA binding site. R526 is an ATP binding site. V537, H539, and I542 together coordinate Mg(2+). A CoA-binding site is contributed by R584. K609 carries the post-translational modification N6-acetyllysine.

This sequence belongs to the ATP-dependent AMP-binding enzyme family. The cofactor is Mg(2+). In terms of processing, acetylated. Deacetylation by the SIR2-homolog deacetylase activates the enzyme.

The enzyme catalyses acetate + ATP + CoA = acetyl-CoA + AMP + diphosphate. Functionally, catalyzes the conversion of acetate into acetyl-CoA (AcCoA), an essential intermediate at the junction of anabolic and catabolic pathways. Acs undergoes a two-step reaction. In the first half reaction, Acs combines acetate with ATP to form acetyl-adenylate (AcAMP) intermediate. In the second half reaction, it can then transfer the acetyl group from AcAMP to the sulfhydryl group of CoA, forming the product AcCoA. Its function is as follows. Enables the cell to use acetate during aerobic growth to generate energy via the TCA cycle, and biosynthetic compounds via the glyoxylate shunt. Acetylates CheY, the response regulator involved in flagellar movement and chemotaxis. This Yersinia pestis protein is Acetyl-coenzyme A synthetase.